The sequence spans 670 residues: Protein angel homolog 1 (670 aa).

2 positions are modified to phosphoserine: serine 77 and serine 105.

It belongs to the CCR4/nocturin family.

The protein is Protein angel homolog 1 (ANGEL1) of Homo sapiens (Human).